Consider the following 194-residue polypeptide: Ras-related protein Rab-22A (194 aa).

12–20 (GDTGVGKSS) contributes to the GTP binding site. The short motif at 34 to 42 (INPTIGASF) is the Effector region element. Residues 60-64 (DTAGQ), 118-121 (NKCD), and 148-150 (SAK) contribute to the GTP site. The tract at residues 170–194 (DANPPSGGKGFKLRRQPSEPQRSCC) is disordered. 2 S-geranylgeranyl cysteine lipidation sites follow: Cys-193 and Cys-194.

Belongs to the small GTPase superfamily. Rab family. Interacts directly with ZFYVE20. Interacts (in its GTP-bound form) with RINL and RABGEF1. Binds EEA1.

The protein resides in the endosome membrane. Its subcellular location is the cell membrane. The protein localises to the early endosome. It is found in the late endosome. It localises to the cell projection. The protein resides in the ruffle. Its subcellular location is the cytoplasmic vesicle. The protein localises to the phagosome. It is found in the phagosome membrane. Its function is as follows. Plays a role in endocytosis and intracellular protein transport. Mediates trafficking of TF from early endosomes to recycling endosomes. Required for NGF-mediated endocytosis of NTRK1, and subsequent neurite outgrowth. Binds GTP and GDP and has low GTPase activity. Alternates between a GTP-bound active form and a GDP-bound inactive form. The chain is Ras-related protein Rab-22A (RAB22A) from Canis lupus familiaris (Dog).